The primary structure comprises 518 residues: FAD-dependent monooxygenase tpcD (518 aa).

The N-terminal stretch at Met1–Ala22 is a signal peptide. Residue Asn61 is glycosylated (N-linked (GlcNAc...) asparagine). One can recognise an FAD-binding PCMH-type domain in the interval Gln75–Gln246. At His112 the chain carries Pros-8alpha-FAD histidine. N-linked (GlcNAc...) asparagine glycosylation is found at Asn163, Asn208, Asn216, and Asn346.

It belongs to the oxygen-dependent FAD-linked oxidoreductase family. FAD is required as a cofactor.

It participates in secondary metabolite biosynthesis; terpenoid biosynthesis. Its function is as follows. FAD-dependent monooxygenase; part of the gene cluster that mediates the biosynthesis of terpestacin. The bifunctional terpene synthase tpcA converts isopentenyl diphosphate (IPP) and dimethylallyl diphosphate (DMAPP) into the sesterterpene preterpestacin I. The C-terminal prenyltransferase (PT) domain of tpcA catalyzes formation of GFPP, whereas the N-terminal terpene cyclase (TC) domain catalyzes the cyclization of GFPP into preterpestacin I. The cytochrome P450 monooxygenase tpcB then hydroxylates preterpestacin I to yield 24-hydroxypreterpstacin I (renamed as preterpestacin II) whereas the cytochrome P450 monooxygenase tpcC further hydroxylates preterpestacin II to yield 16,17-dihydroxypreterpestacin II (renamed as preterpestacin III). Finally, the FAD-dependent monooxygenase tpcD converts preterpestacin III into terpestacin. The chain is FAD-dependent monooxygenase tpcD from Cochliobolus heterostrophus (strain C5 / ATCC 48332 / race O) (Southern corn leaf blight fungus).